The following is a 196-amino-acid chain: Pyridoxal 5'-phosphate synthase subunit PdxT (196 aa).

47–49 (GES) contributes to the L-glutamine binding site. Cys-79 acts as the Nucleophile in catalysis. L-glutamine is bound by residues Arg-106 and 134–135 (IR). Residues His-170 and Glu-172 each act as charge relay system in the active site.

This sequence belongs to the glutaminase PdxT/SNO family. As to quaternary structure, in the presence of PdxS, forms a dodecamer of heterodimers. Only shows activity in the heterodimer.

It catalyses the reaction aldehydo-D-ribose 5-phosphate + D-glyceraldehyde 3-phosphate + L-glutamine = pyridoxal 5'-phosphate + L-glutamate + phosphate + 3 H2O + H(+). It carries out the reaction L-glutamine + H2O = L-glutamate + NH4(+). Its pathway is cofactor biosynthesis; pyridoxal 5'-phosphate biosynthesis. Its function is as follows. Catalyzes the hydrolysis of glutamine to glutamate and ammonia as part of the biosynthesis of pyridoxal 5'-phosphate. The resulting ammonia molecule is channeled to the active site of PdxS. The chain is Pyridoxal 5'-phosphate synthase subunit PdxT from Bacillus cereus (strain ZK / E33L).